Consider the following 111-residue polypeptide: Phosphoribosyl-ATP pyrophosphatase (111 aa).

This sequence belongs to the PRA-PH family.

The protein localises to the cytoplasm. The enzyme catalyses 1-(5-phospho-beta-D-ribosyl)-ATP + H2O = 1-(5-phospho-beta-D-ribosyl)-5'-AMP + diphosphate + H(+). Its pathway is amino-acid biosynthesis; L-histidine biosynthesis; L-histidine from 5-phospho-alpha-D-ribose 1-diphosphate: step 2/9. This chain is Phosphoribosyl-ATP pyrophosphatase, found in Ectopseudomonas mendocina (strain ymp) (Pseudomonas mendocina).